The sequence spans 283 residues: Nucleoid occlusion protein (283 aa).

The H-T-H motif DNA-binding region spans 148-167; it reads EALAQRLGKGQSTIANKLRL.

The protein belongs to the ParB family.

It is found in the cytoplasm. The protein resides in the nucleoid. In terms of biological role, effects nucleoid occlusion by binding relatively nonspecifically to DNA and preventing the assembly of the division machinery in the vicinity of the nucleoid, especially under conditions that disturb the cell cycle. It helps to coordinate cell division and chromosome segregation by preventing the formation of the Z ring through the nucleoid, which would cause chromosome breakage. This Bacillus licheniformis (strain ATCC 14580 / DSM 13 / JCM 2505 / CCUG 7422 / NBRC 12200 / NCIMB 9375 / NCTC 10341 / NRRL NRS-1264 / Gibson 46) protein is Nucleoid occlusion protein.